The sequence spans 493 residues: Argininosuccinate lyase (493 aa).

The protein belongs to the lyase 1 family. Argininosuccinate lyase subfamily.

It is found in the cytoplasm. The enzyme catalyses 2-(N(omega)-L-arginino)succinate = fumarate + L-arginine. Its pathway is amino-acid biosynthesis; L-arginine biosynthesis; L-arginine from L-ornithine and carbamoyl phosphate: step 3/3. This chain is Argininosuccinate lyase, found in Clavibacter sepedonicus (Clavibacter michiganensis subsp. sepedonicus).